Here is a 177-residue protein sequence, read N- to C-terminus: Large ribosomal subunit protein uL10 (177 aa).

It belongs to the universal ribosomal protein uL10 family. As to quaternary structure, part of the ribosomal stalk of the 50S ribosomal subunit. The N-terminus interacts with L11 and the large rRNA to form the base of the stalk. The C-terminus forms an elongated spine to which L12 dimers bind in a sequential fashion forming a multimeric L10(L12)X complex.

Functionally, forms part of the ribosomal stalk, playing a central role in the interaction of the ribosome with GTP-bound translation factors. The chain is Large ribosomal subunit protein uL10 from Caldanaerobacter subterraneus subsp. tengcongensis (strain DSM 15242 / JCM 11007 / NBRC 100824 / MB4) (Thermoanaerobacter tengcongensis).